A 301-amino-acid polypeptide reads, in one-letter code: WD repeat-containing protein SL1-17 (301 aa).

WD repeat units lie at residues 11 to 54 (AHKE…LKCL), 59 to 98 (GHRL…LTKT), 101 to 140 (GDPA…KEGS), 143 to 182 (LEGK…VQFL), 184 to 223 (GHAT…LVIP), 227 to 266 (GHKG…EKHC), and 269 to 300 (THED…IYQC).

The protein is WD repeat-containing protein SL1-17 of Schistosoma mansoni (Blood fluke).